Reading from the N-terminus, the 235-residue chain is Probable transcriptional regulatory protein Cj1172c (235 aa).

This sequence belongs to the TACO1 family.

The protein localises to the cytoplasm. This Campylobacter jejuni subsp. jejuni serotype O:2 (strain ATCC 700819 / NCTC 11168) protein is Probable transcriptional regulatory protein Cj1172c.